The primary structure comprises 398 residues: Serpin-ZX (398 aa).

Positions 342–366 (GTEAAARTARVVTLRSLPVEPVKVD) are RCL.

The protein belongs to the serpin family. As to expression, expressed in roots, coleoptiles, shoots, leaves, embryo and endosperm.

Functionally, inhibits chymotrypsin, cathepsin G and trypsin in vitro. This is Serpin-ZX (PAZX) from Hordeum vulgare (Barley).